Consider the following 217-residue polypeptide: Uridylate kinase (217 aa).

Residue 6-10 (KLSGR) coordinates ATP. Glycine 38 is a binding site for UMP. Positions 39 and 43 each coordinate ATP. UMP-binding positions include aspartate 60 and 107–113 (FQPGQST). Residues asparagine 134, tyrosine 139, and aspartate 142 each coordinate ATP.

This sequence belongs to the UMP kinase family. As to quaternary structure, homohexamer.

The protein localises to the cytoplasm. The enzyme catalyses UMP + ATP = UDP + ADP. It functions in the pathway pyrimidine metabolism; CTP biosynthesis via de novo pathway; UDP from UMP (UMPK route): step 1/1. Inhibited by UTP. Functionally, catalyzes the reversible phosphorylation of UMP to UDP. The chain is Uridylate kinase from Pyrobaculum neutrophilum (strain DSM 2338 / JCM 9278 / NBRC 100436 / V24Sta) (Thermoproteus neutrophilus).